The following is a 114-amino-acid chain: Evasin-1 (114 aa).

An N-terminal signal peptide occupies residues 1–20; it reads MTFKACIAIITALCAMQVIC. 4 disulfides stabilise this stretch: C32-C53, C49-C90, C66-C95, and C85-C104. N39, N54, and N62 each carry an N-linked (GlcNAc...) asparagine glycan.

Belongs to the evasin C8 family. As to quaternary structure, monomer.

The protein resides in the secreted. In terms of biological role, salivary chemokine-binding protein which shows chemokine neutralizing activity and binds to host chemokines CCL3, CCL4 and CCL18. Binds to CCL3 with 1:1 stoichiometry. The polypeptide is Evasin-1 (Rhipicephalus sanguineus (Brown dog tick)).